We begin with the raw amino-acid sequence, 157 residues long: 2-C-methyl-D-erythritol 2,4-cyclodiphosphate synthase (157 aa).

The a divalent metal cation site is built by D8 and H10. 4-CDP-2-C-methyl-D-erythritol 2-phosphate contacts are provided by residues 8–10 and 34–35; these read DVH and HS. H42 contributes to the a divalent metal cation binding site. Residues 56–58, 61–65, 100–106, 132–135, F139, and R142 each bind 4-CDP-2-C-methyl-D-erythritol 2-phosphate; these read DIG, FPDTD, AQAPKMA, and TTTE.

Belongs to the IspF family. Homotrimer. A divalent metal cation serves as cofactor.

The enzyme catalyses 4-CDP-2-C-methyl-D-erythritol 2-phosphate = 2-C-methyl-D-erythritol 2,4-cyclic diphosphate + CMP. Its pathway is isoprenoid biosynthesis; isopentenyl diphosphate biosynthesis via DXP pathway; isopentenyl diphosphate from 1-deoxy-D-xylulose 5-phosphate: step 4/6. Functionally, involved in the biosynthesis of isopentenyl diphosphate (IPP) and dimethylallyl diphosphate (DMAPP), two major building blocks of isoprenoid compounds. Catalyzes the conversion of 4-diphosphocytidyl-2-C-methyl-D-erythritol 2-phosphate (CDP-ME2P) to 2-C-methyl-D-erythritol 2,4-cyclodiphosphate (ME-CPP) with a corresponding release of cytidine 5-monophosphate (CMP). The polypeptide is 2-C-methyl-D-erythritol 2,4-cyclodiphosphate synthase (Serratia proteamaculans (strain 568)).